The sequence spans 315 residues: DNA-directed RNA polymerase subunit alpha (315 aa).

Residues methionine 1–threonine 228 form an alpha N-terminal domain (alpha-NTD) region. The interval lysine 245–glutamate 315 is alpha C-terminal domain (alpha-CTD).

It belongs to the RNA polymerase alpha chain family. Homodimer. The RNAP catalytic core consists of 2 alpha, 1 beta, 1 beta' and 1 omega subunit. When a sigma factor is associated with the core the holoenzyme is formed, which can initiate transcription.

The catalysed reaction is RNA(n) + a ribonucleoside 5'-triphosphate = RNA(n+1) + diphosphate. Functionally, DNA-dependent RNA polymerase catalyzes the transcription of DNA into RNA using the four ribonucleoside triphosphates as substrates. In Clostridioides difficile (strain 630) (Peptoclostridium difficile), this protein is DNA-directed RNA polymerase subunit alpha.